The primary structure comprises 194 residues: Small ribosomal subunit protein uS7 (194 aa).

This sequence belongs to the universal ribosomal protein uS7 family. Part of the 30S ribosomal subunit.

Its function is as follows. One of the primary rRNA binding proteins, it binds directly to 16S rRNA where it nucleates assembly of the head domain of the 30S subunit. Is located at the subunit interface close to the decoding center. The polypeptide is Small ribosomal subunit protein uS7 (Methanocorpusculum labreanum (strain ATCC 43576 / DSM 4855 / Z)).